Reading from the N-terminus, the 144-residue chain is Peptide methionine sulfoxide reductase MsrB (144 aa).

The region spanning 5–127 (KEEKIKSLNR…NSAALRFIPK (123 aa)) is the MsrB domain. C116 functions as the Nucleophile in the catalytic mechanism.

Belongs to the MsrB Met sulfoxide reductase family.

The catalysed reaction is L-methionyl-[protein] + [thioredoxin]-disulfide + H2O = L-methionyl-(R)-S-oxide-[protein] + [thioredoxin]-dithiol. The chain is Peptide methionine sulfoxide reductase MsrB from Bacillus velezensis (strain DSM 23117 / BGSC 10A6 / LMG 26770 / FZB42) (Bacillus amyloliquefaciens subsp. plantarum).